The chain runs to 352 residues: Probable tyrosine-protein kinase DDB_G0290471 (352 aa).

A Protein kinase domain is found at 51–333; that stretch reads IEYVCRLGSG…ISLNQIRSFY (283 aa). Residues 57–65 and Lys-78 contribute to the ATP site; that span reads LGSGSLCRV. Asp-175 functions as the Proton acceptor in the catalytic mechanism.

Belongs to the protein kinase superfamily. TKL Tyr protein kinase family.

It catalyses the reaction L-tyrosyl-[protein] + ATP = O-phospho-L-tyrosyl-[protein] + ADP + H(+). The polypeptide is Probable tyrosine-protein kinase DDB_G0290471 (Dictyostelium discoideum (Social amoeba)).